We begin with the raw amino-acid sequence, 151 residues long: Small ribosomal subunit protein uS19 (151 aa).

The tract at residues 1–23 (MVVNKQGSVKSIKRKARKSRKVT) is disordered. Over residues 11 to 23 (SIKRKARKSRKVT) the composition is skewed to basic residues.

This sequence belongs to the universal ribosomal protein uS19 family.

Its function is as follows. Protein S19 forms a complex with S13 that binds strongly to the 16S ribosomal RNA. In Thermoplasma volcanium (strain ATCC 51530 / DSM 4299 / JCM 9571 / NBRC 15438 / GSS1), this protein is Small ribosomal subunit protein uS19 (rps19).